The following is a 176-amino-acid chain: Peptide deformylase (176 aa).

Fe cation contacts are provided by Cys94 and His136. The active site involves Glu137. Fe cation is bound at residue His140.

It belongs to the polypeptide deformylase family. Requires Fe(2+) as cofactor.

The enzyme catalyses N-terminal N-formyl-L-methionyl-[peptide] + H2O = N-terminal L-methionyl-[peptide] + formate. In terms of biological role, removes the formyl group from the N-terminal Met of newly synthesized proteins. Requires at least a dipeptide for an efficient rate of reaction. N-terminal L-methionine is a prerequisite for activity but the enzyme has broad specificity at other positions. This is Peptide deformylase from Bartonella quintana (strain Toulouse) (Rochalimaea quintana).